A 475-amino-acid polypeptide reads, in one-letter code: Integrator complex subunit 15 (475 aa).

The disordered stretch occupies residues 402-444 (YPHIHPGRPSPLSPHSPHQSTLSSPHSPHTVLTAHPTHPALAP). Residues 416–430 (HSPHQSTLSSPHSPH) show a composition bias toward low complexity.

This sequence belongs to the Integrator subunit 15 family. As to quaternary structure, component of the Integrator complex, composed of core subunits INTS1, INTS2, INTS3, INTS4, INTS5, INTS6, INTS7, INTS8, INTS9/RC74, INTS10, INTS11/CPSF3L, INTS12, INTS13, INTS14 and INTS15. The core complex associates with protein phosphatase 2A subunits PPP2CA and PPP2R1A, to form the Integrator-PP2A (INTAC) complex. INTS15 is part of the tail subcomplex, composed of INTS10, INTS13, INTS14 and INTS15.

It localises to the nucleus. It is found in the chromosome. In terms of biological role, component of the integrator complex, a multiprotein complex that terminates RNA polymerase II (Pol II) transcription in the promoter-proximal region of genes. The integrator complex provides a quality checkpoint during transcription elongation by driving premature transcription termination of transcripts that are unfavorably configured for transcriptional elongation: the complex terminates transcription by (1) catalyzing dephosphorylation of the C-terminal domain (CTD) of Pol II subunit POLR2A/RPB1 and SUPT5H/SPT5, (2) degrading the exiting nascent RNA transcript via endonuclease activity and (3) promoting the release of Pol II from bound DNA. The integrator complex is also involved in terminating the synthesis of non-coding Pol II transcripts, such as enhancer RNAs (eRNAs), small nuclear RNAs (snRNAs), telomerase RNAs and long non-coding RNAs (lncRNAs). INTS15 is part of the integrator tail module that acts as a platform for the recruitment of transcription factors at promoters. Within the integrator complex, INTS15 is required to bridge different integrator modules. The sequence is that of Integrator complex subunit 15 (ints15) from Danio rerio (Zebrafish).